The following is a 158-amino-acid chain: Cyclic pyranopterin monophosphate synthase (158 aa).

Residues 74 to 76 and 112 to 113 each bind substrate; these read MCH and ME. The active site involves D127.

Belongs to the MoaC family. As to quaternary structure, homohexamer; trimer of dimers.

The enzyme catalyses (8S)-3',8-cyclo-7,8-dihydroguanosine 5'-triphosphate = cyclic pyranopterin phosphate + diphosphate. The protein operates within cofactor biosynthesis; molybdopterin biosynthesis. In terms of biological role, catalyzes the conversion of (8S)-3',8-cyclo-7,8-dihydroguanosine 5'-triphosphate to cyclic pyranopterin monophosphate (cPMP). The polypeptide is Cyclic pyranopterin monophosphate synthase (Helicobacter pylori (strain HPAG1)).